A 161-amino-acid chain; its full sequence is MAQLLLIKDVEALGRSGEIVNVKPGFARNFLLPQSLAVIADKNTLRMQERLKAEREKRAIADKKESEAVAMQIEGMTLVQVVKVDQEGHMYGSVTVAEIVHLIQDHAKIELEKKDIQLKHPIKTTGVHSLVVKLKEGVTANFNLKVMSEEGYRTSLEEQKA.

The protein belongs to the bacterial ribosomal protein bL9 family.

Its function is as follows. Binds to the 23S rRNA. This Protochlamydia amoebophila (strain UWE25) protein is Large ribosomal subunit protein bL9.